The sequence spans 187 residues: ATP synthase subunit b (187 aa).

The helical transmembrane segment at 32–52 (NILDTNLINLAIIITVLFVFG) threads the bilayer.

It belongs to the ATPase B chain family. F-type ATPases have 2 components, F(1) - the catalytic core - and F(0) - the membrane proton channel. F(1) has five subunits: alpha(3), beta(3), gamma(1), delta(1), epsilon(1). F(0) has four main subunits: a(1), b(1), b'(1) and c(10-14). The alpha and beta chains form an alternating ring which encloses part of the gamma chain. F(1) is attached to F(0) by a central stalk formed by the gamma and epsilon chains, while a peripheral stalk is formed by the delta, b and b' chains.

It is found in the cellular thylakoid membrane. F(1)F(0) ATP synthase produces ATP from ADP in the presence of a proton or sodium gradient. F-type ATPases consist of two structural domains, F(1) containing the extramembraneous catalytic core and F(0) containing the membrane proton channel, linked together by a central stalk and a peripheral stalk. During catalysis, ATP synthesis in the catalytic domain of F(1) is coupled via a rotary mechanism of the central stalk subunits to proton translocation. Functionally, component of the F(0) channel, it forms part of the peripheral stalk, linking F(1) to F(0). The protein is ATP synthase subunit b of Trichormus variabilis (strain ATCC 29413 / PCC 7937) (Anabaena variabilis).